Reading from the N-terminus, the 412-residue chain is Multifunctional CCA protein (412 aa).

ATP-binding residues include Gly8 and Arg11. CTP-binding residues include Gly8 and Arg11. The Mg(2+) site is built by Glu21 and Asp23. Residues Arg91, Arg137, and Arg140 each coordinate ATP. The CTP site is built by Arg91, Arg137, and Arg140. Residues 228 to 329 (TGIHTLMTLA…LKLFNAIDVW (102 aa)) enclose the HD domain.

It belongs to the tRNA nucleotidyltransferase/poly(A) polymerase family. Bacterial CCA-adding enzyme type 1 subfamily. Monomer. Can also form homodimers and oligomers. Requires Mg(2+) as cofactor. Ni(2+) serves as cofactor.

The enzyme catalyses a tRNA precursor + 2 CTP + ATP = a tRNA with a 3' CCA end + 3 diphosphate. It carries out the reaction a tRNA with a 3' CCA end + 2 CTP + ATP = a tRNA with a 3' CCACCA end + 3 diphosphate. Its function is as follows. Catalyzes the addition and repair of the essential 3'-terminal CCA sequence in tRNAs without using a nucleic acid template. Adds these three nucleotides in the order of C, C, and A to the tRNA nucleotide-73, using CTP and ATP as substrates and producing inorganic pyrophosphate. tRNA 3'-terminal CCA addition is required both for tRNA processing and repair. Also involved in tRNA surveillance by mediating tandem CCA addition to generate a CCACCA at the 3' terminus of unstable tRNAs. While stable tRNAs receive only 3'-terminal CCA, unstable tRNAs are marked with CCACCA and rapidly degraded. This chain is Multifunctional CCA protein, found in Yersinia pseudotuberculosis serotype I (strain IP32953).